The chain runs to 313 residues: Methionyl-tRNA formyltransferase (313 aa).

109-112 (SLLP) serves as a coordination point for (6S)-5,6,7,8-tetrahydrofolate.

This sequence belongs to the Fmt family.

The catalysed reaction is L-methionyl-tRNA(fMet) + (6R)-10-formyltetrahydrofolate = N-formyl-L-methionyl-tRNA(fMet) + (6S)-5,6,7,8-tetrahydrofolate + H(+). Functionally, attaches a formyl group to the free amino group of methionyl-tRNA(fMet). The formyl group appears to play a dual role in the initiator identity of N-formylmethionyl-tRNA by promoting its recognition by IF2 and preventing the misappropriation of this tRNA by the elongation apparatus. The protein is Methionyl-tRNA formyltransferase of Pelotomaculum thermopropionicum (strain DSM 13744 / JCM 10971 / SI).